The primary structure comprises 353 residues: Fe(3+) ions import ATP-binding protein FbpC (353 aa).

One can recognise an ABC transporter domain in the interval 9 to 239 (VTFENVTKKF…PASAFIADFM (231 aa)). 41-48 (GPSGCGKT) provides a ligand contact to ATP.

It belongs to the ABC transporter superfamily. Fe(3+) ion importer (TC 3.A.1.10) family. In terms of assembly, the complex is composed of two ATP-binding proteins (FbpC), two transmembrane proteins (FbpB) and a solute-binding protein (FbpA).

The protein localises to the cell inner membrane. The catalysed reaction is Fe(3+)(out) + ATP + H2O = Fe(3+)(in) + ADP + phosphate + H(+). Part of the ABC transporter complex FbpABC involved in Fe(3+) ions import. Responsible for energy coupling to the transport system. The chain is Fe(3+) ions import ATP-binding protein FbpC from Brucella abortus (strain 2308).